A 148-amino-acid chain; its full sequence is Large ribosomal subunit protein bL9 (148 aa).

Belongs to the bacterial ribosomal protein bL9 family.

Its function is as follows. Binds to the 23S rRNA. The protein is Large ribosomal subunit protein bL9 of Listeria innocua serovar 6a (strain ATCC BAA-680 / CLIP 11262).